The primary structure comprises 423 residues: Glycine amidinotransferase, mitochondrial (423 aa).

The N-terminal 43 residues, 1 to 43 (MLRVRCLRGGSRGAEALHYIGSRLGRTVTGWVQRTFQSTQAAT), are a transit peptide targeting the mitochondrion. Phosphoserine occurs at positions 46 and 49. D170 contacts arginine. Residues D254 and H303 contribute to the active site. Positions 305, 322, 354, and 355 each coordinate arginine. Residue K385 is modified to N6-acetyllysine. The active-site Amidino-cysteine intermediate is C407.

This sequence belongs to the amidinotransferase family. As to quaternary structure, homodimer. In terms of tissue distribution, kidney. Expressed biallelically in placenta.

The protein resides in the mitochondrion inner membrane. It carries out the reaction L-arginine + glycine = guanidinoacetate + L-ornithine. The enzyme catalyses 4-aminobutanoate + L-arginine = 4-guanidinobutanoate + L-ornithine. The catalysed reaction is beta-alanine + L-arginine = 3-guanidinopropanoate + L-ornithine. It catalyses the reaction taurine + L-arginine = taurocyamine + L-ornithine. Its pathway is amine and polyamine biosynthesis; creatine biosynthesis; creatine from L-arginine and glycine: step 1/2. In terms of biological role, transamidinase that catalyzes the transfer of the amidino group of L-arginine onto the amino moiety of acceptor metabolites such as glycine, beta-alanine, gamma-aminobutyric acid (GABA) and taurine yielding the corresponding guanidine derivatives. Catalyzes the rate-limiting step of creatine biosynthesis, namely the transfer of the amidino group from L-arginine to glycine to generate guanidinoacetate, which is then methylated by GAMT to form creatine. Provides creatine as a source for ATP generation in tissues with high energy demands, in particular skeletal muscle, heart and brain. In Sus scrofa (Pig), this protein is Glycine amidinotransferase, mitochondrial (GATM).